A 1356-amino-acid chain; its full sequence is Fibronectin type III domain containing protein 3C1 (1356 aa).

Disordered stretches follow at residues 303 to 341 (PRNMADNIPDTNTTDTITSSSAHTPSISTSNATFCSDNN), 356 to 402 (TYDE…SDVA), and 428 to 452 (NQKKSQSSNASLKEHNTEDRTQPGC). Positions 308 to 341 (DNIPDTNTTDTITSSSAHTPSISTSNATFCSDNN) are enriched in low complexity. A compositionally biased stretch (polar residues) spans 370–393 (PSCTSQSASNPSVSENAHNPSSIN). Over residues 439 to 448 (LKEHNTEDRT) the composition is skewed to basic and acidic residues. Fibronectin type-III domains follow at residues 454–549 (NIEK…TPGC), 553–648 (PPLA…TPPA), 650–741 (LPPK…TRPA), and 745–842 (CPNK…TLPP). The span at 825-838 (GQSRPSDVLTIQTP) shows a compositional bias: polar residues. Residues 825–894 (GQSRPSDVLT…QDRKVHPSSE (70 aa)) are disordered. Over residues 883–894 (PHQDRKVHPSSE) the composition is skewed to basic and acidic residues. 4 Fibronectin type-III domains span residues 914–1007 (PPSQ…TPGT), 1017–1103 (EVES…TKPL), 1104–1199 (PPEP…TKSP), and 1202–1299 (ALKA…TYKH). The segment at 1299-1320 (HHSGHGKGSGSKGKGNHNDKGE) is disordered. The chain crosses the membrane as a helical span at residues 1330-1350 (TFVLTLLIGFALIAVLCAVAV). Topologically, residues 1351 to 1356 (QYLLIN) are cytoplasmic.

Belongs to the FNDC3 family.

The protein resides in the membrane. The chain is Fibronectin type III domain containing protein 3C1 (Fndc3c1) from Mus musculus (Mouse).